The primary structure comprises 1835 residues: AT-rich interactive domain-containing protein 2 (1835 aa).

Ala-2 carries the N-acetylalanine modification. Ser-4 carries the post-translational modification Phosphoserine. Glycyl lysine isopeptide (Lys-Gly) (interchain with G-Cter in SUMO2) cross-links involve residues Lys-7, Lys-15, and Lys-119. The ARID domain occupies 13–105; sequence RRKGLAFLDE…YLEKYEKVHH (93 aa). The LXXLL signature appears at 313–317; it reads LRFLL. Residues 524 to 603 constitute a DNA-binding region (RFX-type winged-helix); sequence ACQWLNAHFE…IHVVGVKRRA (80 aa). A Glycyl lysine isopeptide (Lys-Gly) (interchain with G-Cter in SUMO2) cross-link involves residue Lys-555. A phosphoserine mark is found at Ser-631 and Ser-635. Thr-653 carries the post-translational modification Phosphothreonine. Ser-689 bears the Phosphoserine mark. At Thr-692 the chain carries Phosphothreonine. 5 disordered regions span residues 819–844, 962–1057, 1266–1287, 1295–1314, and 1321–1341; these read QQLI…QSQD, LTGQ…SGES, MENP…KENE, NGRK…KIQS, and LISN…KQNS. 3 stretches are compositionally biased toward low complexity: residues 823–843, 985–996, and 1025–1044; these read TTSP…SQSQ, PTAMSSSSTPQS, and QVQV…QPQQ. A Phosphoserine modification is found at Ser-1300. Residues 1301–1314 show a composition bias toward polar residues; that stretch reads DSSLPPSNSGKIQS. Phosphoserine occurs at positions 1391 and 1496. 2 disordered regions span residues 1488–1522 and 1572–1629; these read DSGS…AEDT and SAVQ…RKPG. Positions 1491-1509 are enriched in polar residues; the sequence is SKVSHSPALSSDVRSTNGT. The segment covering 1513–1522 has biased composition (basic and acidic residues); it reads KTVKRPAEDT. The span at 1573–1592 shows a compositional bias: polar residues; sequence AVQQKQQHPPTYVQNVVPQN. Over residues 1602–1623 the composition is skewed to low complexity; that stretch reads QVQGQPNSSQPSPFSGSSQPGD. The C2H2-type zinc-finger motif lies at 1632–1657; sequence FMCLWQSCKKWFQTPSQVFYHAATEH. Glycyl lysine isopeptide (Lys-Gly) (interchain with G-Cter in SUMO2) cross-links involve residues Lys-1701, Lys-1716, and Lys-1731. The interval 1703–1728 is disordered; it reads DEPGQAGSQKSSTKQPTVGGTSSTPR. A compositionally biased stretch (polar residues) spans 1708–1728; that stretch reads AGSQKSSTKQPTVGGTSSTPR.

As to quaternary structure, component of the SWI/SNF-B (PBAF) chromatin remodeling complex, at least composed of SMARCA4/BRG1, SMARCB1/BAF47/SNF5, ACTL6A/BAF53A or ACTL6B/BAF53B, SMARCE1/BAF57, SMARCD1/BAF60A, SMARCD2/BAF60B, perhaps SMARCD3/BAF60C, SMARCC1/BAF155, SMARCC2/BAF170, PBRM1/BAF180, ARID2/BAF200 and actin. Interacts with SRF. Forms complexes with SRF and SRF cofactors MYOCD, NKX2-5 and SRFBP1. As to expression, highly expressed in heart.

The protein localises to the nucleus. Its function is as follows. Involved in transcriptional activation and repression of select genes by chromatin remodeling (alteration of DNA-nucleosome topology). Required for the stability of the SWI/SNF chromatin remodeling complex SWI/SNF-B (PBAF). May be involved in targeting the complex to different genes. May be involved in regulating transcriptional activation of cardiac genes. The protein is AT-rich interactive domain-containing protein 2 of Homo sapiens (Human).